We begin with the raw amino-acid sequence, 368 residues long: Ankyrin repeat domain-containing protein 40 (368 aa).

M1 is modified (N-acetylmethionine). ANK repeat units lie at residues 9–38 (EQQE…DVNS) and 43–72 (NGWT…DKEI). Disordered regions lie at residues 93 to 115 (MGVE…KKES), 139 to 176 (DSAQ…GTFP), and 196 to 238 (ILRT…NGTY). A compositionally biased stretch (acidic residues) spans 95–107 (VEEEDDDDDDDDN). A compositionally biased stretch (pro residues) spans 149 to 169 (STPPASPPADGSPPLLPPGEP). Residues 212-224 (PVSQSRSLFSSVP) are compositionally biased toward polar residues.

This is Ankyrin repeat domain-containing protein 40 (ANKRD40) from Homo sapiens (Human).